Reading from the N-terminus, the 253-residue chain is Carboxy-S-adenosyl-L-methionine synthase (253 aa).

S-adenosyl-L-methionine contacts are provided by residues Y49, 74-76 (GCS), 98-99 (DN), and N141.

This sequence belongs to the class I-like SAM-binding methyltransferase superfamily. Cx-SAM synthase family.

It carries out the reaction prephenate + S-adenosyl-L-methionine = carboxy-S-adenosyl-L-methionine + 3-phenylpyruvate + H2O. Catalyzes the conversion of S-adenosyl-L-methionine (SAM) to carboxy-S-adenosyl-L-methionine (Cx-SAM). The chain is Carboxy-S-adenosyl-L-methionine synthase from Trichodesmium erythraeum (strain IMS101).